Consider the following 296-residue polypeptide: Phosphatidylserine decarboxylase proenzyme (296 aa).

Residues aspartate 113, histidine 169, and serine 256 each act as charge relay system; for autoendoproteolytic cleavage activity in the active site. Catalysis depends on serine 256, which acts as the Schiff-base intermediate with substrate; via pyruvic acid; for decarboxylase activity. Serine 256 bears the Pyruvic acid (Ser); by autocatalysis mark.

It belongs to the phosphatidylserine decarboxylase family. PSD-B subfamily. Prokaryotic type II sub-subfamily. As to quaternary structure, heterodimer of a large membrane-associated beta subunit and a small pyruvoyl-containing alpha subunit. It depends on pyruvate as a cofactor. Is synthesized initially as an inactive proenzyme. Formation of the active enzyme involves a self-maturation process in which the active site pyruvoyl group is generated from an internal serine residue via an autocatalytic post-translational modification. Two non-identical subunits are generated from the proenzyme in this reaction, and the pyruvate is formed at the N-terminus of the alpha chain, which is derived from the carboxyl end of the proenzyme. The autoendoproteolytic cleavage occurs by a canonical serine protease mechanism, in which the side chain hydroxyl group of the serine supplies its oxygen atom to form the C-terminus of the beta chain, while the remainder of the serine residue undergoes an oxidative deamination to produce ammonia and the pyruvoyl prosthetic group on the alpha chain. During this reaction, the Ser that is part of the protease active site of the proenzyme becomes the pyruvoyl prosthetic group, which constitutes an essential element of the active site of the mature decarboxylase.

The protein resides in the cell membrane. The enzyme catalyses a 1,2-diacyl-sn-glycero-3-phospho-L-serine + H(+) = a 1,2-diacyl-sn-glycero-3-phosphoethanolamine + CO2. It participates in phospholipid metabolism; phosphatidylethanolamine biosynthesis; phosphatidylethanolamine from CDP-diacylglycerol: step 2/2. Catalyzes the formation of phosphatidylethanolamine (PtdEtn) from phosphatidylserine (PtdSer). In Clostridium beijerinckii (strain ATCC 51743 / NCIMB 8052) (Clostridium acetobutylicum), this protein is Phosphatidylserine decarboxylase proenzyme.